A 58-amino-acid chain; its full sequence is UPF0391 membrane protein Sputcn32_1322 (58 aa).

A run of 2 helical transmembrane segments spans residues 6-26 and 28-48; these read LMFL…IAGA and AGIA…SLLV.

Belongs to the UPF0391 family.

It localises to the cell membrane. The chain is UPF0391 membrane protein Sputcn32_1322 from Shewanella putrefaciens (strain CN-32 / ATCC BAA-453).